A 64-amino-acid polypeptide reads, in one-letter code: Large ribosomal subunit protein bL35 (64 aa).

The interval 17–41 is disordered; the sequence is TGSGKVKRERMNGSHNLEHKNRKRT. Residues 25–35 are compositionally biased toward basic and acidic residues; it reads ERMNGSHNLEH.

Belongs to the bacterial ribosomal protein bL35 family.

The sequence is that of Large ribosomal subunit protein bL35 from Chlorobaculum parvum (strain DSM 263 / NCIMB 8327) (Chlorobium vibrioforme subsp. thiosulfatophilum).